The sequence spans 151 residues: Caveolin-3 (151 aa).

Topologically, residues 1 to 83 (MMAEEHTDLE…RLLSTLLGVP (83 aa)) are cytoplasmic. Lys-38 participates in a covalent cross-link: Glycyl lysine isopeptide (Lys-Gly) (interchain with G-Cter in SUMO3). Positions 64 to 114 (TFTVSKYWCYRLLSTLLGVPLALLWGFLFACISFCHIWAVVPCIKSYLIEI) are required for interaction with DAG1. The helical intramembrane region spans 84 to 104 (LALLWGFLFACISFCHIWAVV). The Cytoplasmic portion of the chain corresponds to 105–151 (PCIKSYLIEIQCISHIYSLCIRTFCNPLFAALGQVCSSIKVVLRKEV).

The protein belongs to the caveolin family. As to quaternary structure, homooligomer. Interacts with DLG1 and KCNA5; forms a ternary complex. Interacts with TRIM72. Interacts with MUSK; may regulate MUSK signaling. Interacts with DAG1 (via its C-terminal); the interaction prevents binding of DAG1 with DMD. Interacts with DYSF. Interacts with POPDC1. Interacts with CAVIN1 and CAVIN2. Interacts with CAVIN4. Post-translationally, sumoylation with SUMO3 by PIAS4 may reduce agonist-induced internalization and desensitization of adrenergic receptor ABRD2. In terms of tissue distribution, expressed predominantly in muscle.

It is found in the golgi apparatus membrane. It localises to the cell membrane. The protein localises to the membrane. The protein resides in the caveola. Its subcellular location is the sarcolemma. In terms of biological role, may act as a scaffolding protein within caveolar membranes. Interacts directly with G-protein alpha subunits and can functionally regulate their activity. May also regulate voltage-gated potassium channels. Plays a role in the sarcolemma repair mechanism of both skeletal muscle and cardiomyocytes that permits rapid resealing of membranes disrupted by mechanical stress. Mediates the recruitment of CAVIN2 and CAVIN3 proteins to the caveolae. This Homo sapiens (Human) protein is Caveolin-3 (CAV3).